A 425-amino-acid polypeptide reads, in one-letter code: MESPDSSSGSAPPRVLRRQQQQPGSAPELPPGFRFHPTDEELVVHYLKKKAASVPLPVTIIAEVDLYKFDPWDLPEKANFGEQEWYFFSPRDRKYPNGARPNRAATSGYWKATGTDKPIMSSGSTREKVGVKKALVFYRGKPPKGVKTNWIMHEYRLTDTSSSAAAVATTRRPPPPITGGSKGAVSLRLDDWVLCRIYKKTNKAGAGQRSMECEDSVEDAVAAYAPSSQQHATAAAGMAGSDGAGGVAAAHGGDYSSLLHHDSHEDTFLVNGLLTAEDAAGLSTGASSLSQLAAAARAAATPCDATKQLLAPSPTPFNWFEAFLPRAKEFPSGLSRSSRDIGDMSLSSTVDRSLSEAGAVAIDTGDAANGANTMPAFINPLGVQGATYQQHQAIMGASLPSESAAAAAACNFQHPFQLSRVNWDS.

Residues 1-10 show a composition bias toward polar residues; the sequence is MESPDSSSGS. The tract at residues 1–34 is disordered; that stretch reads MESPDSSSGSAPPRVLRRQQQQPGSAPELPPGFR. Residues 12-23 are compositionally biased toward low complexity; sequence PPRVLRRQQQQP. One can recognise an NAC domain in the interval 29-200; it reads LPPGFRFHPT…DWVLCRIYKK (172 aa). Residues 129-206 mediate DNA binding; that stretch reads VGVKKALVFY…IYKKTNKAGA (78 aa).

In terms of tissue distribution, highest expression in stamens. Expressed in leaves.

The protein resides in the nucleus. Functionally, transcription factor of the NAC family associated with male fertility. Involved in anther development, but not in senescence. Reduced expression of NAC5 via RNAi leads to male-sterility. This Oryza sativa subsp. japonica (Rice) protein is NAC domain-containing protein 10.